We begin with the raw amino-acid sequence, 342 residues long: Platelet-activating factor receptor (342 aa).

Topologically, residues 1–16 (MEPHDSSHMDSEFRYT) are extracellular. A helical transmembrane segment spans residues 17–38 (LFPIVYSIIFVLGVIANGYVLW). Residues 39 to 54 (VFARLYPCKKFNEIKI) are Cytoplasmic-facing. A helical transmembrane segment spans residues 55–74 (FMVNLTMADMLFLITLPLWI). The Extracellular portion of the chain corresponds to 75-91 (VYYQNQGNWILPKFLCN). C90 and C173 form a disulfide bridge. A helical membrane pass occupies residues 92–113 (VAGCLFFINTYCSVAFLGVITY). The Cytoplasmic portion of the chain corresponds to 114–133 (NRFQAVTRPIKTAQANTRKR). Residues 134–155 (GISLSLVIWVAIVGAASYFLIL) traverse the membrane as a helical segment. At 156-184 (DSTNTVPDSAGSGNVTRCFEHYEKGSVPV) the chain is on the extracellular side. The N-linked (GlcNAc...) asparagine glycan is linked to N169. Residues 185–205 (LIIHIFIVFSFFLVFLIILFC) form a helical membrane-spanning segment. Over 206-233 (NLVIIRTLLMQPVQQQRNAEVKRRALWM) the chain is Cytoplasmic. The helical transmembrane segment at 234 to 254 (VCTVLAVFIICFVPHHVVQLP) threads the bilayer. The Extracellular portion of the chain corresponds to 255 to 276 (WTLAELGFQDSKFHQAINDAHQ). A helical membrane pass occupies residues 277–296 (VTLCLLSTNCVLDPVIYCFL). At 297–342 (TKKFRKHLTEKFYSMRSSRKCSRATTDTVTEVVVPFNQIPGNSLKN) the chain is on the cytoplasmic side.

It belongs to the G-protein coupled receptor 1 family. Interacts with ARRB1. In terms of tissue distribution, expressed in the placenta, lung, left and right heart ventricles, heart atrium, leukocytes and differentiated HL-60 granulocytes.

It is found in the cell membrane. Its function is as follows. Receptor for platelet activating factor, a chemotactic phospholipid mediator that possesses potent inflammatory, smooth-muscle contractile and hypotensive activity. Seems to mediate its action via a G protein that activates a phosphatidylinositol-calcium second messenger system. The polypeptide is Platelet-activating factor receptor (PTAFR) (Homo sapiens (Human)).